The primary structure comprises 123 residues: MEMSLRVALFFAFWVCLTTGSLNEICYQEKVVGNCGSQLYPYYFNSQSGKCERFMYTGCGKNDNNFGYLFECERTCPGDLDLGDVCSLEPEGGHCRAYFIKYFFNATSGMCEKFVYGGCGGNV.

The first 20 residues, 1 to 20, serve as a signal peptide directing secretion; the sequence is MEMSLRVALFFAFWVCLTTG. BPTI/Kunitz inhibitor domains follow at residues 26 to 76 and 86 to 123; these read CYQE…ERTC and CSLE…GGNV. Intrachain disulfides connect C26–C76, C35–C59, C51–C72, C86–C111, and C95–C119.

The protein belongs to the venom Kunitz-type family. 02 (native) subfamily. As to expression, expressed by the venom gland.

It is found in the secreted. Dual-function toxin that inhibits both serine proteases and voltage-gated potassium channels (Kv). The protein is U13-hexatoxin-Hi1a of Hadronyche infensa (Fraser island funnel-web spider).